A 364-amino-acid chain; its full sequence is Fructose-1,6-bisphosphatase class 1 3 (364 aa).

The Mg(2+) site is built by E101, D123, L125, and D126. Substrate-binding positions include 126 to 129 (DGSS) and N218. Residue E290 participates in Mg(2+) binding.

The protein belongs to the FBPase class 1 family. In terms of assembly, homotetramer. Mg(2+) is required as a cofactor.

The protein localises to the cytoplasm. The enzyme catalyses beta-D-fructose 1,6-bisphosphate + H2O = beta-D-fructose 6-phosphate + phosphate. It functions in the pathway carbohydrate biosynthesis; gluconeogenesis. This Cupriavidus necator (strain ATCC 17699 / DSM 428 / KCTC 22496 / NCIMB 10442 / H16 / Stanier 337) (Ralstonia eutropha) protein is Fructose-1,6-bisphosphatase class 1 3.